The primary structure comprises 142 residues: HTH-type transcriptional regulator MntR (142 aa).

Residues 1-63 (MPTPSMEDYI…YEKYRGLILT (63 aa)) enclose the HTH dtxR-type domain. 6 residues coordinate Mn(2+): D8, E11, H77, E99, E102, and H103.

It belongs to the DtxR/MntR family. In terms of assembly, homodimer.

The protein localises to the cytoplasm. Its activity is regulated as follows. DNA binding is strongly activated by Mn(2+). Functionally, central regulator of manganese homeostasis. This is HTH-type transcriptional regulator MntR from Listeria welshimeri serovar 6b (strain ATCC 35897 / DSM 20650 / CCUG 15529 / CIP 8149 / NCTC 11857 / SLCC 5334 / V8).